A 193-amino-acid polypeptide reads, in one-letter code: Rho-related protein racF2 (193 aa).

Gly-10 to Thr-17 contacts GTP. The short motif at Tyr-32–Tyr-40 is the Effector region element. GTP contacts are provided by residues Asp-57–Gln-61 and Thr-115–Asp-118. The residue at position 190 (Cys-190) is a Cysteine methyl ester. A lipid anchor (S-geranylgeranyl cysteine) is attached at Cys-190. Residues Thr-191–Met-193 constitute a propeptide, removed in mature form.

The protein belongs to the small GTPase superfamily. Rho family.

It is found in the cell membrane. This chain is Rho-related protein racF2 (racF2), found in Dictyostelium discoideum (Social amoeba).